A 91-amino-acid polypeptide reads, in one-letter code: MFSRVLALLAVLLLSANTWAAIEINNHQARNMDDVQSLGVIYINHNFATESEARQALNEETDAQGATYYHVILMREPGSNGNMHASADIYR.

The signal sequence occupies residues 1-20; sequence MFSRVLALLAVLLLSANTWA.

Belongs to the BhsA/McbA family.

Its subcellular location is the periplasm. This is an uncharacterized protein from Escherichia coli O157:H7.